A 96-amino-acid chain; its full sequence is Aspartyl/glutamyl-tRNA(Asn/Gln) amidotransferase subunit C (96 aa).

It belongs to the GatC family. As to quaternary structure, heterotrimer of A, B and C subunits.

It carries out the reaction L-glutamyl-tRNA(Gln) + L-glutamine + ATP + H2O = L-glutaminyl-tRNA(Gln) + L-glutamate + ADP + phosphate + H(+). It catalyses the reaction L-aspartyl-tRNA(Asn) + L-glutamine + ATP + H2O = L-asparaginyl-tRNA(Asn) + L-glutamate + ADP + phosphate + 2 H(+). Allows the formation of correctly charged Asn-tRNA(Asn) or Gln-tRNA(Gln) through the transamidation of misacylated Asp-tRNA(Asn) or Glu-tRNA(Gln) in organisms which lack either or both of asparaginyl-tRNA or glutaminyl-tRNA synthetases. The reaction takes place in the presence of glutamine and ATP through an activated phospho-Asp-tRNA(Asn) or phospho-Glu-tRNA(Gln). This is Aspartyl/glutamyl-tRNA(Asn/Gln) amidotransferase subunit C from Exiguobacterium sibiricum (strain DSM 17290 / CCUG 55495 / CIP 109462 / JCM 13490 / 255-15).